The chain runs to 361 residues: Transmembrane protein 116 (361 aa).

Helical transmembrane passes span 29 to 49, 64 to 84, 103 to 123, 147 to 167, 210 to 230, 261 to 281, and 295 to 315; these read WIQMTMAVLSILGAGSIILYA, FLLSLTDLLLALSWLCGGLLF, TLYMASFFYTLHYVWVLYTGL, LGPVLSCLLPLLLTAPVFVAG, CMAIFLGTFLITIVGMSIFMG, MVLYPSAFFFCWGPALLLATM, and VALYILQAFTSASQGLLNCLV.

The protein localises to the membrane. In Danio rerio (Zebrafish), this protein is Transmembrane protein 116 (tmem116).